A 114-amino-acid chain; its full sequence is Large ribosomal subunit protein bL17 (114 aa).

It belongs to the bacterial ribosomal protein bL17 family. Part of the 50S ribosomal subunit. Contacts protein L32.

This Elusimicrobium minutum (strain Pei191) protein is Large ribosomal subunit protein bL17.